We begin with the raw amino-acid sequence, 210 residues long: MFGFLKQVGDYTRDAVDAARNLAQGFAVTFDHMQRRPVTVQYPYEKLIPSERYRGRIHYEFDKCIACEVCVRVCPINLPVVDWVMNKATKKKELRNYSIDFGVCIFCGNCVEYCPTNCLSMTEEYELAAFDRHSLNYDNVALGRLPTSVTTDPSVQPLRELVYLPAGEMDPHTVSADRPRAGKLPAEVLETLAPVKDEGQSSKAVLKEDA.

2 consecutive 4Fe-4S ferredoxin-type domains span residues 55–84 (GRIH…VDWV) and 95–124 (RNYS…MTEE). The [4Fe-4S] cluster site is built by C64, C67, C70, C74, C104, C107, C110, and C114.

The protein belongs to the complex I 23 kDa subunit family. In terms of assembly, NDH-1 is composed of at least 11 different subunits. The cofactor is [4Fe-4S] cluster.

The protein localises to the cellular thylakoid membrane. It catalyses the reaction a plastoquinone + NADH + (n+1) H(+)(in) = a plastoquinol + NAD(+) + n H(+)(out). The catalysed reaction is a plastoquinone + NADPH + (n+1) H(+)(in) = a plastoquinol + NADP(+) + n H(+)(out). In terms of biological role, NDH-1 shuttles electrons from an unknown electron donor, via FMN and iron-sulfur (Fe-S) centers, to quinones in the respiratory and/or the photosynthetic chain. The immediate electron acceptor for the enzyme in this species is believed to be plastoquinone. Couples the redox reaction to proton translocation, and thus conserves the redox energy in a proton gradient. The protein is NAD(P)H-quinone oxidoreductase subunit I of Synechococcus sp. (strain CC9902).